Consider the following 158-residue polypeptide: Putative 4-hydroxy-4-methyl-2-oxoglutarate aldolase (158 aa).

Residues 75 to 78 (GDLI) and arginine 97 contribute to the substrate site. An a divalent metal cation-binding site is contributed by aspartate 98.

Belongs to the class II aldolase/RraA-like family. Homotrimer. It depends on a divalent metal cation as a cofactor.

The catalysed reaction is 4-hydroxy-4-methyl-2-oxoglutarate = 2 pyruvate. It carries out the reaction oxaloacetate + H(+) = pyruvate + CO2. Its function is as follows. Catalyzes the aldol cleavage of 4-hydroxy-4-methyl-2-oxoglutarate (HMG) into 2 molecules of pyruvate. Also contains a secondary oxaloacetate (OAA) decarboxylase activity due to the common pyruvate enolate transition state formed following C-C bond cleavage in the retro-aldol and decarboxylation reactions. This is Putative 4-hydroxy-4-methyl-2-oxoglutarate aldolase from Saccharopolyspora erythraea (strain ATCC 11635 / DSM 40517 / JCM 4748 / NBRC 13426 / NCIMB 8594 / NRRL 2338).